A 250-amino-acid polypeptide reads, in one-letter code: Endomucin (250 aa).

The N-terminal stretch at 1–20 is a signal peptide; sequence MRLLQVTALFFLLSNSLCRG. 2 stretches are compositionally biased toward low complexity: residues 24-38 and 45-60; these read KALT…SATT and TNKS…TTNS. Disordered regions lie at residues 24–83 and 105–153; these read KALT…ETTT and NAVS…LTTA. N-linked (GlcNAc...) asparagine glycosylation is found at N46, N115, and N119. Composition is skewed to polar residues over residues 105–135 and 143–153; these read NAVS…NQLP and TETPSASLTTA. Residues 180–200 form a helical membrane-spanning segment; sequence VILPVVIALIVITVLVFTLVG. The disordered stretch occupies residues 210–250; that stretch reads PGTPESGNDQPQSDKESVKLLTVKTISHESGEHSAQGKAKN. S226 carries the phosphoserine modification.

Post-translationally, highly O-glycosylated. Sialic acid-rich glycoprotein.

The protein resides in the membrane. Endothelial sialomucin, also called endomucin or mucin-like sialoglycoprotein, which interferes with the assembly of focal adhesion complexes and inhibits interaction between cells and the extracellular matrix. The sequence is that of Endomucin (Emcn) from Rattus norvegicus (Rat).